The following is a 490-amino-acid chain: Phosphoglucosamine mutase (490 aa).

The active-site Phosphoserine intermediate is Ser-139. Residues Ser-139, Asp-279, Asp-281, and Asp-283 each contribute to the Mg(2+) site. Ser-139 carries the post-translational modification Phosphoserine.

This sequence belongs to the phosphohexose mutase family. It depends on Mg(2+) as a cofactor. In terms of processing, activated by phosphorylation.

It catalyses the reaction alpha-D-glucosamine 1-phosphate = D-glucosamine 6-phosphate. Catalyzes the conversion of glucosamine-6-phosphate to glucosamine-1-phosphate. This is Phosphoglucosamine mutase from Nostoc sp. (strain PCC 7120 / SAG 25.82 / UTEX 2576).